A 370-amino-acid chain; its full sequence is Protein maelstrom 2 (370 aa).

The segment at residues 2 to 68 is a DNA-binding region (HMG box); that stretch reads AQNKPNAFMA…VLERESKTER (67 aa).

This sequence belongs to the maelstrom family.

Its subcellular location is the cytoplasm. The protein localises to the nucleus. Its function is as follows. Involved both in the piRNA and miRNA metabolic processes. As a component of the meiotic nuage, plays a central role during oogenesis by repressing transposable elements and preventing their mobilization, which is essential for the germline integrity. Repression of transposable elements is mediated via the piRNA metabolic process, which mediates the repression of transposable elements during meiosis by forming complexes composed of piRNAs and Piwi proteins and governs the repression of transposons. As a nuclear component, it is required for proper differentiation in the germline stem cell (GSC) lineage by repressing microRNA-7 (miR-7), thereby acting as an indirect regulator of bag-of-marbles (Bam). Acts by binding to the promoter of miR-7 gene and repressing its expression; miR-7 repression alleviates the Bam repression by miR-7, thereby allowing differentiation in the germline stem cell (GSC) lineage. This is Protein maelstrom 2 (mael2) from Drosophila pseudoobscura pseudoobscura (Fruit fly).